The primary structure comprises 208 residues: N-hydroxyputrescine acetyltransferase (208 aa).

Belongs to the IucB family.

It carries out the reaction N-hydroxyputrescine + acetyl-CoA = N(1)-acetyl-N(1)-hydroxyputrescine + CoA. It functions in the pathway siderophore biosynthesis. Its function is as follows. N-acetyltransferase involved in the biosynthesis of fimsbactin A, the major siderophore produced by A.baumannii. Catalyzes the acetylation of N-hydroxyputrescine to form N(1)-acetyl-N(1)-hydroxyputrescine (ahPutr). The protein is N-hydroxyputrescine acetyltransferase of Acinetobacter baumannii (strain ATCC 17978 / DSM 105126 / CIP 53.77 / LMG 1025 / NCDC KC755 / 5377).